The primary structure comprises 40 residues: MPPRRKRVSSAPRRRRRTYRRTTAHKHQDRPVHRRRRRRH.

Positions 1–40 (MPPRRKRVSSAPRRRRRTYRRTTAHKHQDRPVHRRRRRRH) are disordered.

In terms of tissue distribution, testis.

The protein localises to the nucleus. Its subcellular location is the chromosome. Functionally, protamines substitute for histones in the chromatin of sperm during the haploid phase of spermatogenesis. They compact sperm DNA into a highly condensed, stable and inactive complex. This chain is Protamine-1 (PBP1), found in Bufo japonicus (Japanese common toad).